The sequence spans 1609 residues: Factor-induced gene 2 protein (1609 aa).

The N-terminal stretch at M1–A22 is a signal peptide. N29 carries an N-linked (GlcNAc...) asparagine glycan. 3 disordered regions span residues S129–S165, S196–S243, and T266–V312. The span at Q137 to F148 shows a compositional bias: polar residues. Low complexity predominate over residues L150–S165. A compositionally biased stretch (polar residues) spans S196–D212. 2 stretches are compositionally biased toward low complexity: residues T213–S243 and T274–S285. N-linked (GlcNAc...) asparagine glycosylation occurs at N231. A compositionally biased stretch (polar residues) spans M286–V312. Residues N298, N347, N386, N426, N495, N535, N661, N674, and N713 are each glycosylated (N-linked (GlcNAc...) asparagine). The tract at residues A846–S876 is disordered. Residues N889, N907, and N1079 are each glycosylated (N-linked (GlcNAc...) asparagine). Polar residues predominate over residues C1231–A1243. A disordered region spans residues C1231–S1259. A compositionally biased stretch (low complexity) spans S1244–S1259. N-linked (GlcNAc...) asparagine glycosylation is present at N1400. G1588 is lipidated: GPI-anchor amidated glycine. Residues S1589–I1609 constitute a propeptide, removed in mature form.

In terms of processing, N-glycosylated.

The protein resides in the secreted. The protein localises to the cell wall. Its subcellular location is the membrane. Required for efficient mating. Plays a role in maintenance of cell wall integrity during mating. Important for mating cell projection shape and conjugation bridge diameter. Plays a role in cell fusion and nuclear migration. The chain is Factor-induced gene 2 protein (FIG2) from Saccharomyces cerevisiae (strain ATCC 204508 / S288c) (Baker's yeast).